Here is a 194-residue protein sequence, read N- to C-terminus: Ribonuclease HII (194 aa).

Positions 3–193 (ILTAGVDEAG…VRNLFAQQAL (191 aa)) constitute an RNase H type-2 domain. Residues Asp9, Glu10, and Asp101 each coordinate a divalent metal cation.

The protein belongs to the RNase HII family. It depends on Mn(2+) as a cofactor. The cofactor is Mg(2+).

Its subcellular location is the cytoplasm. The enzyme catalyses Endonucleolytic cleavage to 5'-phosphomonoester.. Endonuclease that specifically degrades the RNA of RNA-DNA hybrids. This is Ribonuclease HII from Neisseria meningitidis serogroup C / serotype 2a (strain ATCC 700532 / DSM 15464 / FAM18).